Reading from the N-terminus, the 848-residue chain is Neurofilament medium polypeptide (848 aa).

Residues 1-10 (MSYTLDSLGN) show a composition bias toward polar residues. The segment at 1-51 (MSYTLDSLGNPSAYRRVTETRSSFSRVSGSPSSGFRSQSWSRGSPSTVSSS) is disordered. S2 bears the N-acetylserine mark. The segment at 2-102 (SYTLDSLGNP…KLSRSNEKEQ (101 aa)) is head. The span at 21 to 44 (RSSFSRVSGSPSSGFRSQSWSRGS) shows a compositional bias: low complexity. S30 carries the phosphoserine modification. The residue at position 42 (R42) is an Omega-N-methylarginine. The O-linked (GlcNAc) threonine glycan is linked to T47. The residue at position 97 (S97) is a Phosphoserine. The region spanning 99–410 (EKEQLQGLND…KLLEGEETRF (312 aa)) is the IF rod domain. A coil 1A region spans residues 103-134 (LQGLNDRFAGYIEKVHYLEQQNKEIEAEIQAL). Residues 135 to 147 (RQKQASHAQLGDA) are linker 1. Residues 148 to 246 (YDQEIRELRA…EEEVADLLAQ (99 aa)) form a coil 1B region. S224 is subject to Phosphoserine. The segment at 247–263 (IQASHITVERKDYLKTD) is linker 12. The coil 2A stretch occupies residues 264–285 (ISTALKEIRSQLECHSDQNMHQ). The interval 286–289 (AEEW) is linker 2. Residues 290 to 410 (FKCRYAKLTE…KLLEGEETRF (121 aa)) are coil 2B. Y318 is modified (phosphotyrosine). S344, S416, and S428 each carry phosphoserine. Residues 411-848 (STFSGSITGP…AIVKEVTQGD (438 aa)) are tail. T430 carries an O-linked (GlcNAc) threonine glycan. 2 positions are modified to phosphoserine: S466 and S482. The interval 482–785 (SAKEEKEEAE…GEDSSDDKVV (304 aa)) is disordered. Residues 488-498 (EEAEEKEEEPE) are compositionally biased toward acidic residues. A compositionally biased stretch (basic and acidic residues) spans 499-509 (AEKSPVKSPEA). Phosphoserine is present on residues S502 and S506. Residues 510 to 533 (KEEEEEGEKEEEEEGQEEEEEEDE) show a composition bias toward acidic residues. Positions 534-553 (GVKSDQAEEGGSEKEGSSEK) are enriched in basic and acidic residues. 4 positions are modified to phosphoserine: S537, S545, S550, and S551. Residues 554 to 576 (DEGEQEEEEGETEAEGEGEEAEA) show a composition bias toward acidic residues. T565 carries the post-translational modification Phosphothreonine. Positions 577–604 (KEEKKIEGKVEEVAVKEEIKVEKPEKAK) are enriched in basic and acidic residues. Residues S605 and S610 each carry the phosphoserine modification. 2 stretches are compositionally biased toward basic and acidic residues: residues 611–677 (PVEE…KAVE) and 689–711 (SLEKDTKEEKPQPQEKVKEKAEE). T642 bears the Phosphothreonine mark. Phosphoserine occurs at positions 645, 669, 689, 715, 723, 753, and 769. Composition is skewed to basic and acidic residues over residues 720–732 (SDRSPQESKKEDI) and 748–760 (TQEKGSGREEEKG). Over residues 771–785 (AEEKKGEDSSDDKVV) the composition is skewed to basic and acidic residues.

It belongs to the intermediate filament family. Forms heterodimers with NEFL; which can further hetero-oligomerize (in vitro). Forms heterodimers with INA (in vitro). Post-translationally, there are a number of repeats of the tripeptide K-S-P, NFM is phosphorylated on a number of the serines in this motif. It is thought that phosphorylation of NFM results in the formation of interfilament cross bridges that are important in the maintenance of axonal caliber. Phosphorylation seems to play a major role in the functioning of the larger neurofilament polypeptides (NF-M and NF-H), the levels of phosphorylation being altered developmentally and coincidentally with a change in the neurofilament function. In terms of processing, phosphorylated in the head and rod regions by the PKC kinase PKN1, leading to the inhibition of polymerization. As to expression, expressed in the sciatic nerve (at protein level).

The protein localises to the cytoplasm. It is found in the cytoskeleton. The protein resides in the cell projection. It localises to the axon. Functionally, neurofilaments usually contain three intermediate filament proteins: NEFL, NEFM, and NEFH which are involved in the maintenance of neuronal caliber. May additionally cooperate with the neuronal intermediate filament proteins PRPH and INA to form neuronal filamentous networks. This is Neurofilament medium polypeptide (Nefm) from Mus musculus (Mouse).